The following is a 160-amino-acid chain: 6,7-dimethyl-8-ribityllumazine synthase (160 aa).

5-amino-6-(D-ribitylamino)uracil contacts are provided by residues Phe-23, 61–63 (SFE), and 85–87 (AVI). 90–91 (DT) lines the (2S)-2-hydroxy-3-oxobutyl phosphate pocket. His-93 functions as the Proton donor in the catalytic mechanism. Phe-118 contacts 5-amino-6-(D-ribitylamino)uracil. Arg-132 is a binding site for (2S)-2-hydroxy-3-oxobutyl phosphate.

This sequence belongs to the DMRL synthase family.

It carries out the reaction (2S)-2-hydroxy-3-oxobutyl phosphate + 5-amino-6-(D-ribitylamino)uracil = 6,7-dimethyl-8-(1-D-ribityl)lumazine + phosphate + 2 H2O + H(+). It participates in cofactor biosynthesis; riboflavin biosynthesis; riboflavin from 2-hydroxy-3-oxobutyl phosphate and 5-amino-6-(D-ribitylamino)uracil: step 1/2. Catalyzes the formation of 6,7-dimethyl-8-ribityllumazine by condensation of 5-amino-6-(D-ribitylamino)uracil with 3,4-dihydroxy-2-butanone 4-phosphate. This is the penultimate step in the biosynthesis of riboflavin. This is 6,7-dimethyl-8-ribityllumazine synthase from Synechococcus sp. (strain CC9605).